The primary structure comprises 276 residues: ADP-dependent (S)-NAD(P)H-hydrate dehydratase (276 aa).

The 265-residue stretch at Thr-5 to Phe-269 folds into the YjeF C-terminal domain. (6S)-NADPHX contacts are provided by Ala-40, Gly-103, and His-152. Gly-211 contacts AMP. Asp-212 lines the (6S)-NADPHX pocket.

It belongs to the NnrD/CARKD family. As to quaternary structure, homotetramer. Mg(2+) is required as a cofactor.

The enzyme catalyses (6S)-NADHX + ADP = AMP + phosphate + NADH + H(+). It catalyses the reaction (6S)-NADPHX + ADP = AMP + phosphate + NADPH + H(+). Catalyzes the dehydration of the S-form of NAD(P)HX at the expense of ADP, which is converted to AMP. Together with NAD(P)HX epimerase, which catalyzes the epimerization of the S- and R-forms, the enzyme allows the repair of both epimers of NAD(P)HX, a damaged form of NAD(P)H that is a result of enzymatic or heat-dependent hydration. In Listeria monocytogenes serovar 1/2a (strain ATCC BAA-679 / EGD-e), this protein is ADP-dependent (S)-NAD(P)H-hydrate dehydratase.